Consider the following 401-residue polypeptide: All trans-polyprenyl-diphosphate synthase PDSS2 (401 aa).

Belongs to the FPP/GGPP synthase family. In terms of assembly, heterotetramer composed of 2 PDSS1/DPS1 and 2 PDSS2/DLP1 subunits.

It is found in the mitochondrion. It carries out the reaction 7 isopentenyl diphosphate + (2E,6E)-farnesyl diphosphate = all-trans-decaprenyl diphosphate + 7 diphosphate. The enzyme catalyses 6 isopentenyl diphosphate + (2E,6E)-farnesyl diphosphate = all-trans-nonaprenyl diphosphate + 6 diphosphate. It participates in cofactor biosynthesis; ubiquinone biosynthesis. Functionally, heterotetrameric enzyme that catalyzes the condensation of farnesyl diphosphate (FPP), which acts as a primer, and isopentenyl diphosphate (IPP) to produce prenyl diphosphates of varying chain lengths and participates in the determination of the side chain of ubiquinone. Supplies nona and decaprenyl diphosphate, the precursors for the side chain of the isoprenoid quinones ubiquinone-9 (Q9) and ubiquinone-10 (Q10) respectively. The enzyme adds isopentenyl diphosphate molecules sequentially to farnesyl diphosphate with trans stereochemistry. May play a role during cerebellar development. May regulate mitochondrial respiratory chain function. The sequence is that of All trans-polyprenyl-diphosphate synthase PDSS2 from Rattus norvegicus (Rat).